We begin with the raw amino-acid sequence, 539 residues long: Chaperonin GroEL (539 aa).

ATP-binding positions include 29-32 (TLGP), 86-90 (DGTTT), glycine 412, 475-477 (NAA), and aspartate 491.

Belongs to the chaperonin (HSP60) family. As to quaternary structure, forms a cylinder of 14 subunits composed of two heptameric rings stacked back-to-back. Interacts with the co-chaperonin GroES.

Its subcellular location is the cytoplasm. The enzyme catalyses ATP + H2O + a folded polypeptide = ADP + phosphate + an unfolded polypeptide.. Its function is as follows. Together with its co-chaperonin GroES, plays an essential role in assisting protein folding. The GroEL-GroES system forms a nano-cage that allows encapsulation of the non-native substrate proteins and provides a physical environment optimized to promote and accelerate protein folding. The chain is Chaperonin GroEL from Tsukamurella tyrosinosolvens.